Here is an 882-residue protein sequence, read N- to C-terminus: Exo-beta-D-glucosaminidase ARB_07888 (882 aa).

The first 21 residues, 1 to 21, serve as a signal peptide directing secretion; it reads MWFVFRPAAIPALLLTLGVSA. A propeptide spanning residues 22–31 is cleaved from the precursor; that stretch reads LSPLRPLVST. N86, N200, N234, N237, N287, and N442 each carry an N-linked (GlcNAc...) asparagine glycan. Catalysis depends on D466, which acts as the Proton donor. E538 (nucleophile) is an active-site residue. 3 N-linked (GlcNAc...) asparagine glycosylation sites follow: N688, N773, and N816.

Belongs to the glycosyl hydrolase 2 family. As to quaternary structure, monomer.

Its subcellular location is the secreted. The catalysed reaction is Hydrolysis of chitosan or chitosan oligosaccharides to remove successive D-glucosamine residues from the non-reducing termini.. Hydrolyzes chitosan and chitooligosaccharides with retention of anomeric configuration. The polypeptide is Exo-beta-D-glucosaminidase ARB_07888 (Arthroderma benhamiae (strain ATCC MYA-4681 / CBS 112371) (Trichophyton mentagrophytes)).